We begin with the raw amino-acid sequence, 426 residues long: Proline--tRNA ligase (426 aa).

It belongs to the class-II aminoacyl-tRNA synthetase family. ProS type 2 subfamily. As to quaternary structure, homodimer.

It localises to the cytoplasm. It carries out the reaction tRNA(Pro) + L-proline + ATP = L-prolyl-tRNA(Pro) + AMP + diphosphate. In terms of biological role, catalyzes the attachment of proline to tRNA(Pro) in a two-step reaction: proline is first activated by ATP to form Pro-AMP and then transferred to the acceptor end of tRNA(Pro). This chain is Proline--tRNA ligase, found in Rickettsia africae (strain ESF-5).